A 259-amino-acid polypeptide reads, in one-letter code: Ribonuclease HII (259 aa).

The region spanning 70-258 (TLIAGIDEVG…VKSLVLGKKE (189 aa)) is the RNase H type-2 domain. A divalent metal cation-binding residues include Asp-76, Glu-77, and Asp-168.

The protein belongs to the RNase HII family. Mn(2+) is required as a cofactor. The cofactor is Mg(2+).

It is found in the cytoplasm. It carries out the reaction Endonucleolytic cleavage to 5'-phosphomonoester.. In terms of biological role, endonuclease that specifically degrades the RNA of RNA-DNA hybrids. The sequence is that of Ribonuclease HII from Streptococcus pneumoniae (strain P1031).